The primary structure comprises 299 residues: Ribosomal protein L11 methyltransferase (299 aa).

Positions 149, 170, 192, and 234 each coordinate S-adenosyl-L-methionine.

Belongs to the methyltransferase superfamily. PrmA family.

It localises to the cytoplasm. It carries out the reaction L-lysyl-[protein] + 3 S-adenosyl-L-methionine = N(6),N(6),N(6)-trimethyl-L-lysyl-[protein] + 3 S-adenosyl-L-homocysteine + 3 H(+). Functionally, methylates ribosomal protein L11. The sequence is that of Ribosomal protein L11 methyltransferase from Chromohalobacter salexigens (strain ATCC BAA-138 / DSM 3043 / CIP 106854 / NCIMB 13768 / 1H11).